A 245-amino-acid chain; its full sequence is Ribosomal RNA large subunit methyltransferase E (245 aa).

A disordered region spans residues 1–25 (MTKSPIGGNRSGRKLGQKVKKGKLK). Over residues 11 to 25 (SGRKLGQKVKKGKLK) the composition is skewed to basic residues. Residues G81, W83, D104, D120, and D144 each contribute to the S-adenosyl-L-methionine site. K184 serves as the catalytic Proton acceptor.

It belongs to the class I-like SAM-binding methyltransferase superfamily. RNA methyltransferase RlmE family.

It is found in the cytoplasm. It catalyses the reaction uridine(2552) in 23S rRNA + S-adenosyl-L-methionine = 2'-O-methyluridine(2552) in 23S rRNA + S-adenosyl-L-homocysteine + H(+). Functionally, specifically methylates the uridine in position 2552 of 23S rRNA at the 2'-O position of the ribose in the fully assembled 50S ribosomal subunit. This is Ribosomal RNA large subunit methyltransferase E from Sinorhizobium fredii (strain NBRC 101917 / NGR234).